We begin with the raw amino-acid sequence, 232 residues long: MSQFPEVLDNNLLHAENNETAEYIQNDGTNQSEVFMEHPYTPNMHPINMPSIVEGAVHPYNNLIHHNDAIPPAKYASMRQMTEDFWREKKQKMTEISEEDMLNKSKNMSVPMARVKKIMRIDDDVRNFMIASDAPIFMAQAAEFFIEEMTAMGWQYVSEARRRILQKADIASAVQKSDQFDFLIDFLPPKTVPTTSTNGPGHMSEDSFQDPNMHSDFHQRTSNSSVNRSHHN.

The tract at residues Thr-191–Asn-232 is disordered. Residues Arg-220–Asn-232 show a composition bias toward polar residues.

The protein belongs to the NFYC/HAP5 subunit family. In terms of assembly, forms two NF-Y heterotrimeric transcription factor complexes: the nfya-1-NF-Y complex is composed of nfya-1, nfyb-1 and nfyc-1, and the nfya-2-NF-Y complex is composed of nfya-2, nfyb-1 and nfyc-1. Interacts with nfyb-1; the interaction is direct and is required for the interaction with either nfya-1 or nfya-2, and subsequent binding of the complex to the 5'-CCAAT-3' box motif in DNA. Expressed in certain parts of the gonads with high expression in fertilized oocytes in the uterus and mature oocytes from the distal to the proximal arm of the gonad, but weak expression in the syncytial ovaries and immature oocytes at the beginning of the proximal arm of the gonad. Expressed in the excretory cell, secretory cells in the pharyngeal terminal bulb wall, in the small ganglia surrounding the pharynx and in the neurons running anteriorly to the sensory organs in the head. Not expressed in the intestine, the hypodermis or body wall muscle surrounding the pseudocoelomic space.

It localises to the nucleus. The protein localises to the cytoplasm. It is found in the perikaryon. Functionally, component of sequence-specific heterotrimeric transcription factor (nfya-1-NF-Y and nfya-2-NF-Y) complexes which specifically recognize a 5'-CCAAT-3' box motif found in the promoters of its target genes to regulate their expression and control cellular identity in particular tissue types. In association with the components in the NF-Y complexes, represses the expression of the T-box transcription factor tbx-2 throughout larval development, which most likely restricts its expression to certain tissues. May act to repress txb-2 expression in conjunction with tbx-2 itself, which has an autoregulatory role. In association with the components in the nfya-1-NF-Y complex, negatively regulates the expression of the homeobox protein egl-5 to spatially restrict its expression in tissues such as the head. May regulate egl-5 expression in association with the mes-2-mes-3-mes-6 complex. The polypeptide is Nuclear transcription factor Y subunit nfyc-1 (Caenorhabditis elegans).